Consider the following 215-residue polypeptide: Pyridoxine/pyridoxamine 5'-phosphate oxidase (215 aa).

Residues Arg9 to Tyr12 and Lys69 each bind substrate. FMN-binding positions include Arg64–Lys69, Phe79–Thr80, Lys86, and Gln108. Substrate contacts are provided by Tyr126, Arg130, and Ser134. Residues Gln143–Ser144 and Trp188 contribute to the FMN site. Arg194–His196 is a substrate binding site. Arg198 serves as a coordination point for FMN.

It belongs to the pyridoxamine 5'-phosphate oxidase family. In terms of assembly, homodimer. The cofactor is FMN.

It carries out the reaction pyridoxamine 5'-phosphate + O2 + H2O = pyridoxal 5'-phosphate + H2O2 + NH4(+). It catalyses the reaction pyridoxine 5'-phosphate + O2 = pyridoxal 5'-phosphate + H2O2. Its pathway is cofactor metabolism; pyridoxal 5'-phosphate salvage; pyridoxal 5'-phosphate from pyridoxamine 5'-phosphate: step 1/1. It participates in cofactor metabolism; pyridoxal 5'-phosphate salvage; pyridoxal 5'-phosphate from pyridoxine 5'-phosphate: step 1/1. Catalyzes the oxidation of either pyridoxine 5'-phosphate (PNP) or pyridoxamine 5'-phosphate (PMP) into pyridoxal 5'-phosphate (PLP). The sequence is that of Pyridoxine/pyridoxamine 5'-phosphate oxidase from Pseudomonas fluorescens (strain SBW25).